The chain runs to 225 residues: Phosphoribosylformylglycinamidine synthase subunit PurQ (225 aa).

Residues 4-225 (RVGVITFPGT…YSVLDSVISA (222 aa)) enclose the Glutamine amidotransferase type-1 domain. The active-site Nucleophile is the Cys87. Active-site residues include His196 and Glu198.

Part of the FGAM synthase complex composed of 1 PurL, 1 PurQ and 2 PurS subunits.

The protein localises to the cytoplasm. It catalyses the reaction N(2)-formyl-N(1)-(5-phospho-beta-D-ribosyl)glycinamide + L-glutamine + ATP + H2O = 2-formamido-N(1)-(5-O-phospho-beta-D-ribosyl)acetamidine + L-glutamate + ADP + phosphate + H(+). The catalysed reaction is L-glutamine + H2O = L-glutamate + NH4(+). The protein operates within purine metabolism; IMP biosynthesis via de novo pathway; 5-amino-1-(5-phospho-D-ribosyl)imidazole from N(2)-formyl-N(1)-(5-phospho-D-ribosyl)glycinamide: step 1/2. Functionally, part of the phosphoribosylformylglycinamidine synthase complex involved in the purines biosynthetic pathway. Catalyzes the ATP-dependent conversion of formylglycinamide ribonucleotide (FGAR) and glutamine to yield formylglycinamidine ribonucleotide (FGAM) and glutamate. The FGAM synthase complex is composed of three subunits. PurQ produces an ammonia molecule by converting glutamine to glutamate. PurL transfers the ammonia molecule to FGAR to form FGAM in an ATP-dependent manner. PurS interacts with PurQ and PurL and is thought to assist in the transfer of the ammonia molecule from PurQ to PurL. In Rhodococcus jostii (strain RHA1), this protein is Phosphoribosylformylglycinamidine synthase subunit PurQ.